The following is a 122-amino-acid chain: uncharacterized protein (122 aa).

Helical transmembrane passes span 34–54 (IIFL…GVLV) and 91–111 (FVLA…FVSF).

The protein resides in the cell membrane. This is an uncharacterized protein from Mycoplasma pneumoniae (strain ATCC 29342 / M129 / Subtype 1) (Mycoplasmoides pneumoniae).